The following is a 1392-amino-acid chain: DNA-directed RNA polymerase subunit beta (1392 aa).

This sequence belongs to the RNA polymerase beta chain family. As to quaternary structure, the RNAP catalytic core consists of 2 alpha, 1 beta, 1 beta' and 1 omega subunit. When a sigma factor is associated with the core the holoenzyme is formed, which can initiate transcription.

The enzyme catalyses RNA(n) + a ribonucleoside 5'-triphosphate = RNA(n+1) + diphosphate. Functionally, DNA-dependent RNA polymerase catalyzes the transcription of DNA into RNA using the four ribonucleoside triphosphates as substrates. The chain is DNA-directed RNA polymerase subunit beta from Neisseria gonorrhoeae (strain NCCP11945).